The primary structure comprises 117 residues: Conotoxin vil14.2 (117 aa).

The first 22 residues, 1–22 (MGFRVLVLVVMATTFALPFTFF), serve as a signal peptide directing secretion. Residues 23–90 (EEPGRSPFRP…FAELSVGQRR (68 aa)) constitute a propeptide that is removed on maturation. The tract at residues 53 to 77 (RADGQPPDMRQPEMRRPEMRRPEVR) is disordered. The segment covering 62 to 77 (RQPEMRRPEMRRPEVR) has biased composition (basic and acidic residues). Intrachain disulfides connect C96–C116 and C100–C112.

This sequence belongs to the conotoxin R superfamily. Expressed by the venom duct.

It is found in the secreted. In Conus villepinii (Villepin's cone), this protein is Conotoxin vil14.2.